The chain runs to 323 residues: Lipoyl synthase (323 aa).

[4Fe-4S] cluster is bound by residues C61, C66, C72, C87, C91, C94, and S300. Residues 73 to 289 form the Radical SAM core domain; sequence WDKKHATFMI…ETVAYSKGFL (217 aa).

It belongs to the radical SAM superfamily. Lipoyl synthase family. It depends on [4Fe-4S] cluster as a cofactor.

It localises to the cytoplasm. It catalyses the reaction [[Fe-S] cluster scaffold protein carrying a second [4Fe-4S](2+) cluster] + N(6)-octanoyl-L-lysyl-[protein] + 2 oxidized [2Fe-2S]-[ferredoxin] + 2 S-adenosyl-L-methionine + 4 H(+) = [[Fe-S] cluster scaffold protein] + N(6)-[(R)-dihydrolipoyl]-L-lysyl-[protein] + 4 Fe(3+) + 2 hydrogen sulfide + 2 5'-deoxyadenosine + 2 L-methionine + 2 reduced [2Fe-2S]-[ferredoxin]. The protein operates within protein modification; protein lipoylation via endogenous pathway; protein N(6)-(lipoyl)lysine from octanoyl-[acyl-carrier-protein]: step 2/2. Its function is as follows. Catalyzes the radical-mediated insertion of two sulfur atoms into the C-6 and C-8 positions of the octanoyl moiety bound to the lipoyl domains of lipoate-dependent enzymes, thereby converting the octanoylated domains into lipoylated derivatives. The sequence is that of Lipoyl synthase from Rhizobium etli (strain CIAT 652).